Consider the following 293-residue polypeptide: Probable flavonol synthase 6 (293 aa).

The Fe2OG dioxygenase domain occupies 156–253; the sequence is KAQYVMRINY…RMSWPILVEP (98 aa). 164–166 contacts 2-oxoglutarate; that stretch reads NYY. 3 residues coordinate Fe cation: His178, Asp180, and His234. 244–246 is a binding site for 2-oxoglutarate; it reads RMS.

Belongs to the iron/ascorbate-dependent oxidoreductase family. Fe(2+) is required as a cofactor.

The catalysed reaction is a (2R,3R)-dihydroflavonol + 2-oxoglutarate + O2 = a flavonol + succinate + CO2 + H2O. Its pathway is secondary metabolite biosynthesis; flavonoid biosynthesis. The sequence is that of Probable flavonol synthase 6 (FLS6) from Arabidopsis thaliana (Mouse-ear cress).